The chain runs to 242 residues: Ribose-5-phosphate isomerase A (242 aa).

Substrate contacts are provided by residues 39–42 (SGST), 95–98 (DGAD), and 108–111 (KGGG). Glutamate 117 (proton acceptor) is an active-site residue. Lysine 135 serves as a coordination point for substrate.

It belongs to the ribose 5-phosphate isomerase family. Homodimer.

The catalysed reaction is aldehydo-D-ribose 5-phosphate = D-ribulose 5-phosphate. It participates in carbohydrate degradation; pentose phosphate pathway; D-ribose 5-phosphate from D-ribulose 5-phosphate (non-oxidative stage): step 1/1. Functionally, catalyzes the reversible conversion of ribose-5-phosphate to ribulose 5-phosphate. This Chlamydia trachomatis serovar D (strain ATCC VR-885 / DSM 19411 / UW-3/Cx) protein is Ribose-5-phosphate isomerase A.